Here is a 375-residue protein sequence, read N- to C-terminus: Type II restriction enzyme ApaLI (375 aa).

The catalysed reaction is Endonucleolytic cleavage of DNA to give specific double-stranded fragments with terminal 5'-phosphates.. Functionally, a subtype P restriction enzyme that recognizes the double-stranded sequence 5'-GTGCAC-3' and cleaves after G-1. The polypeptide is Type II restriction enzyme ApaLI (Acetobacter pasteurianus (Acetobacter turbidans)).